Here is a 122-residue protein sequence, read N- to C-terminus: Insulin-like 3 (122 aa).

Residues 1–15 (MRAPLLLMLLALGSA) form the signal peptide. Disulfide bonds link Cys-29–Cys-107, Cys-41–Cys-120, and Cys-106–Cys-111.

It belongs to the insulin family. As to quaternary structure, heterodimer of a B chain and an A chain linked by two disulfide bonds. Expressed exclusively in Leydig cells of the testis.

The protein resides in the secreted. Functionally, seems to play a role in testicular function. May be a trophic hormone with a role in testicular descent in fetal life. Is a ligand for LGR8 receptor. This Mus musculus (Mouse) protein is Insulin-like 3 (Insl3).